The chain runs to 474 residues: Dipeptidase A (474 aa).

Cys6 is a catalytic residue.

This sequence belongs to the peptidase C69 family. In terms of assembly, homooctamer.

It catalyses the reaction an L-aminoacyl-L-amino acid + H2O = 2 an L-alpha-amino acid. Inhibited by Zn(2+), Cu(2+), Ca(2+) and Cd(2+). Hydrolyzes a wide range of dipeptides but unable to hydrolyze dipeptides containing proline. Highest activity against Met-Ala. The chain is Dipeptidase A (pepDA) from Lactobacillus helveticus (Lactobacillus suntoryeus).